The sequence spans 549 residues: Dicarboxylate transporter 2.2, chloroplastic (549 aa).

The transit peptide at M1–R54 directs the protein to the chloroplast. The disordered stretch occupies residues A57 to G79. Residues P67–P77 are compositionally biased toward pro residues. Helical transmembrane passes span G79–I99, I115–F135, T151–A171, A220–G240, L247–L267, W294–Y314, N344–A364, I365–V385, W403–M423, L436–F456, F470–F490, and V523–W543.

This sequence belongs to the SLC13A/DASS transporter (TC 2.A.47) family. DIT1 subfamily. In terms of tissue distribution, expressed in roots, rosette and cauline leaves, stems, flowers and siliques.

The protein resides in the plastid. It localises to the chloroplast inner membrane. In terms of biological role, may be involved in the transport of dicarboxylate compounds. This chain is Dicarboxylate transporter 2.2, chloroplastic (DIT2-2), found in Arabidopsis thaliana (Mouse-ear cress).